Here is a 457-residue protein sequence, read N- to C-terminus: Zinc finger protein ZIPIC (457 aa).

The ZAD domain maps to 3–84; sequence CCICQFSVRV…ILELIHSPYM (82 aa). C2H2-type zinc fingers lie at residues 257–280, 284–306, 312–334, 340–362, 369–391, and 397–419; these read IQCPSCPEKFSSRRAYNVHTKREH, YVCDQCGKTLQSYSGFIGHLQNH, FACPVCPERFSRKFRLKHHMAWH, YQCDVCSKRFVHKVALYKHKMIH, LECQVCGFKTRTKAHLERHMRSH, and FACPVCNKRFSQMYNMKAHLREH. A C2H2-type 7; degenerate zinc finger spans residues 430-448; that stretch reads FHCSKCTHTFINEQNYDAH.

Interacts (via region between the ZAD domain and the first zinc finger domain) with Cp190 (via centrosomal targeting M domain); the interaction is direct. Interacts with pita.

Its subcellular location is the nucleus. The protein resides in the chromosome. Insulator DNA-binding protein. Recruits Cp190 and cooperatively binds to chromatin promoter regions to exert transcriptional regulator and chromatin insulator functions. Chromatin insulators are regulatory elements that establish independent domains of transcriptional activity within eukaryotic genomes. Insulators are proposed to structure the chromatin fiber into independent domains of differing transcriptional potential by promoting the formation of distinct chromatin loops to form topologically associating domains (TADs). Chromatin binding sites often cluster with those of other insulator DNA-binding proteins such as pita, CTCF and BEAF-32, but not Su(Hw). The chain is Zinc finger protein ZIPIC from Drosophila melanogaster (Fruit fly).